Reading from the N-terminus, the 122-residue chain is Histone H2B (122 aa).

The segment at 1-31 (MPPKPSGKGQKKAGKAKGAPSTNKKRKRKRK) is disordered. Pro-2 carries the n,N-dimethylproline modification. Residue Gln-10 forms an Isoglutamyl lysine isopeptide (Gln-Lys) (interchain with K-5 in histone H4) linkage. The O-linked (GlcNAc) serine glycan is linked to Ser-109. Lys-117 participates in a covalent cross-link: Glycyl lysine isopeptide (Lys-Gly) (interchain with G-Cter in ubiquitin).

Belongs to the histone H2B family. In terms of assembly, the nucleosome is a histone octamer containing two molecules each of H2A, H2B, H3 and H4 assembled in one H3-H4 heterotetramer and two H2A-H2B heterodimers. The octamer wraps approximately 147 bp of DNA. In terms of processing, monoubiquitination of Lys-117 gives a specific tag for epigenetic transcriptional activation and is also prerequisite for histone H3 'Lys-4' and 'Lys-79' methylation. Post-translationally, glcNAcylation at Ser-109 promotes monoubiquitination of Lys-117. It fluctuates in response to extracellular glucose, and associates with transcribed genes.

It localises to the nucleus. It is found in the chromosome. Core component of nucleosome. Nucleosomes wrap and compact DNA into chromatin, limiting DNA accessibility to the cellular machineries which require DNA as a template. Histones thereby play a central role in transcription regulation, DNA repair, DNA replication and chromosomal stability. DNA accessibility is regulated via a complex set of post-translational modifications of histones, also called histone code, and nucleosome remodeling. This Patiria pectinifera (Starfish) protein is Histone H2B.